The chain runs to 527 residues: UPF0053 protein YegH (527 aa).

7 consecutive transmembrane segments (helical) span residues 14–34, 51–71, 81–101, 122–142, 145–165, 185–205, and 207–227; these read ITLI…IAIL, LLLA…LVTL, FTFS…LFKA, GAKF…FSLD, ITAV…VIAI, IVIL…AEGF, and FVIP…IEAL. CBS domains lie at 306-366 and 371-429; these read MTSR…GEPL and LIRQ…PNEV.

This sequence belongs to the UPF0053 family.

It is found in the cell membrane. This is UPF0053 protein YegH (yegH) from Shigella flexneri.